We begin with the raw amino-acid sequence, 153 residues long: MMATFSCVCCGTSTTSTYCGKRCERKHVYSETRNKRLELYKKYLLEPQKCALNGIVGHSCGMPCSIAEEACDQLPIVSRFCGQKHADLYDSLLKRSEQELLLEFLQKKMQELKLSHIVKMAKLESEVNAIRKSVASSFEDSVGCDDSSSVSKL.

A C-1 region spans residues 1–23 (MMATFSCVCCGTSTTSTYCGKRC). The interaction with TGB1 stretch occupies residues 1-85 (MMATFSCVCC…IVSRFCGQKH (85 aa)). Positions 19–47 (CGKRCERKHVYSETRNKRLELYKKYLLEP) are basic motif (BM). Positions 60 to 85 (CGMPCSIAEEACDQLPIVSRFCGQKH) are C-2. The segment at 86-127 (ADLYDSLLKRSEQELLLEFLQKKMQELKLSHIVKMAKLESEV) is interaction with replication protein alpha-A. Residues 92 to 132 (LLKRSEQELLLEFLQKKMQELKLSHIVKMAKLESEVNAIRK) adopt a coiled-coil conformation. S96 is modified (phosphoserine).

It belongs to the virgaviridae suppressor of RNA silencing family. Homooligomer. Interacts (via C-terminus) with replication protein alpha-A. Interacts (via N-terminus) with the movement protein TGB1; this interaction targets gammab-TGB1 at the periphery of chloroplasts and plasmodesmata. Interacts with host autophagy protein ATG7; this interaction disrupts the host ATG7-ATG8 interaction to promote viral infection. Interacts (via BM region) with host STY46; this interaction inhibits the viral infection. Post-translationally, phosphorylated at Ser-96 by a host PKA-like kinase; the phosphorylation at this site seems to suppress host cell death. In terms of processing, serine-phosphorylated by host STY46 kinase.

It localises to the host chloroplast envelope. The protein resides in the host endoplasmic reticulum. The protein localises to the host cell junction. It is found in the host plasmodesma. In terms of biological role, suppressor of RNA-mediated gene silencing, also known as post-transcriptional gene silencing (PTGS), a mechanism of plant viral defense that limits the accumulation of viral RNAs. Promotes viral cell-to-cell long distance movement by enhancing the ATPase activity of TGB1. Enhances RNA helicase activity of replication protein alpha-A. Suppresses autophagy induced by the host as a defense mechanism against viral infection. The chain is Suppressor of RNA silencing from Barley stripe mosaic virus (BSMV).